The sequence spans 1213 residues: tRNA wybutosine-synthesizing protein 4 (1213 aa).

Low complexity-rich tracts occupy residues Met-1–Thr-13 and Ala-39–Thr-52. The tract at residues Met-1–Ser-76 is disordered. Residues His-53 to Asp-67 are compositionally biased toward basic and acidic residues. Residues Arg-117, Gly-148, and Asp-180 each contribute to the S-adenosyl-L-methionine site. The segment covering Ser-215–Pro-248 has biased composition (low complexity). Positions Ser-215–Ala-272 are disordered. Residues Asp-289–Leu-290 and Glu-318 each bind S-adenosyl-L-methionine. The disordered stretch occupies residues Glu-879–Ser-900. In terms of domain architecture, JmjC spans Pro-1006 to Asn-1166.

The protein belongs to the methyltransferase superfamily. LCMT family.

It catalyses the reaction 7-[(3S)-3-amino-3-carboxypropyl]wyosine(37) in tRNA(Phe) + S-adenosyl-L-methionine = 7-[(3S)-(3-amino-3-methoxycarbonyl)propyl]wyosine(37) in tRNA(Phe) + S-adenosyl-L-homocysteine. The enzyme catalyses 7-[(3S)-(3-amino-3-methoxycarbonyl)propyl]wyosine(37) in tRNA(Phe) + S-adenosyl-L-methionine + CO2 = wybutosine(37) in tRNA(Phe) + S-adenosyl-L-homocysteine + 2 H(+). It participates in tRNA modification; wybutosine-tRNA(Phe) biosynthesis. Functionally, probable S-adenosyl-L-methionine-dependent methyltransferase that acts as a component of the wybutosine biosynthesis pathway. Wybutosine is a hyper modified guanosine with a tricyclic base found at the 3'-position adjacent to the anticodon of eukaryotic phenylalanine tRNA. May methylate the carboxyl group of leucine residues to form alpha-leucine ester residues. The sequence is that of tRNA wybutosine-synthesizing protein 4 (lcm-2) from Neurospora crassa (strain ATCC 24698 / 74-OR23-1A / CBS 708.71 / DSM 1257 / FGSC 987).